Here is a 622-residue protein sequence, read N- to C-terminus: Chaperone protein HscA homolog (622 aa).

This sequence belongs to the heat shock protein 70 family.

Functionally, chaperone involved in the maturation of iron-sulfur cluster-containing proteins. Has a low intrinsic ATPase activity which is markedly stimulated by HscB. This chain is Chaperone protein HscA homolog, found in Pseudoalteromonas atlantica (strain T6c / ATCC BAA-1087).